Here is a 102-residue protein sequence, read N- to C-terminus: Large ribosomal subunit protein P1 (102 aa).

The tract at residues Ala-69 to Thr-91 is disordered. Positions Ala-74–Asp-90 are enriched in basic and acidic residues.

Belongs to the eukaryotic ribosomal protein P1/P2 family. In terms of assembly, part of the 50S ribosomal subunit. Homodimer, it forms part of the ribosomal stalk which helps the ribosome interact with GTP-bound translation factors. Forms a heptameric uL10/P0(P1)2(P1)2(P1)2 complex, where uL10/P0 forms an elongated spine to which the P1 dimers bind in a sequential fashion.

Its function is as follows. Forms part of the ribosomal stalk, playing a central role in the interaction of the ribosome with GTP-bound translation factors. The polypeptide is Large ribosomal subunit protein P1 (Methanocaldococcus jannaschii (strain ATCC 43067 / DSM 2661 / JAL-1 / JCM 10045 / NBRC 100440) (Methanococcus jannaschii)).